The sequence spans 148 residues: UPF0179 protein Ta1159 (148 aa).

The protein belongs to the UPF0179 family.

The protein is UPF0179 protein Ta1159 of Thermoplasma acidophilum (strain ATCC 25905 / DSM 1728 / JCM 9062 / NBRC 15155 / AMRC-C165).